The sequence spans 258 residues: Very-long-chain aldehyde decarbonylase GL1-9 (258 aa).

Helical transmembrane passes span 13-33 (MGTFAPIALYWVYAGGYQLVL), 63-83 (GVLLQQLVQAIVAMILFMVTS), 88-108 (VVVQPPIIIQAFQFLVAMLVM), 149-169 (PLEGLLLDTVGGAISFLVSGM), and 175-195 (VFFFCFAVLKTVDDHCGLWLP). The 137-residue stretch at 101–237 (FLVAMLVMDS…FSIWDRILGT (137 aa)) folds into the Fatty acid hydroxylase domain.

It belongs to the sterol desaturase family. Homodimer.

It is found in the endoplasmic reticulum membrane. The catalysed reaction is a long-chain fatty aldehyde + 2 NADPH + O2 + H(+) = a long-chain alkane + formate + 2 NADP(+) + H2O. Aldehyde decarbonylase involved in the conversion of aldehydes to alkanes. Core component of a very-long-chain alkane synthesis complex. The chain is Very-long-chain aldehyde decarbonylase GL1-9 from Oryza sativa subsp. indica (Rice).